Consider the following 238-residue polypeptide: UDP-2,3-diacylglucosamine hydrolase (238 aa).

The Mn(2+) site is built by aspartate 8, histidine 10, aspartate 41, asparagine 78, and histidine 113. Substrate is bound at residue asparagine 78–arginine 79. Substrate-binding residues include aspartate 121, serine 159, asparagine 163, lysine 166, and histidine 194. Residues histidine 194 and histidine 196 each contribute to the Mn(2+) site.

It belongs to the LpxH family. Mn(2+) serves as cofactor.

It is found in the cell inner membrane. It catalyses the reaction UDP-2-N,3-O-bis[(3R)-3-hydroxytetradecanoyl]-alpha-D-glucosamine + H2O = 2-N,3-O-bis[(3R)-3-hydroxytetradecanoyl]-alpha-D-glucosaminyl 1-phosphate + UMP + 2 H(+). It participates in glycolipid biosynthesis; lipid IV(A) biosynthesis; lipid IV(A) from (3R)-3-hydroxytetradecanoyl-[acyl-carrier-protein] and UDP-N-acetyl-alpha-D-glucosamine: step 4/6. In terms of biological role, hydrolyzes the pyrophosphate bond of UDP-2,3-diacylglucosamine to yield 2,3-diacylglucosamine 1-phosphate (lipid X) and UMP by catalyzing the attack of water at the alpha-P atom. Involved in the biosynthesis of lipid A, a phosphorylated glycolipid that anchors the lipopolysaccharide to the outer membrane of the cell. The polypeptide is UDP-2,3-diacylglucosamine hydrolase (Shewanella piezotolerans (strain WP3 / JCM 13877)).